The primary structure comprises 292 residues: MKGTIIKGIGGFYYIKIDNSEEIIECKARGKFRHTELTPMIGDYVEISIDKNNKGAIEKIYERRSELFRPAVANVTQALVVFSFKNPDINIDLLNKFLLLCEYNNLKAIVCFNKMDLVNKEDYKDIISMIEQAGYDIIFLNAEKERNMDIIKKLIKDNVTVFCGPSGVGKSTMLNKIIGKETMITGNISEKLKRGKHTTRHSELIYVDEGLLVDTPGFSSLDINFMEKEDLLHCIPEFRDFIGECKFTGCLHHREPNCAVKKAVEEGHIHKNRYDFYIKTLEEFMNRRKKKW.

The region spanning 64-221 (RSELFRPAVA…LVDTPGFSSL (158 aa)) is the CP-type G domain. GTP contacts are provided by residues 113-116 (NKMD) and 164-172 (GPSGVGKST). Residues Cys-245, Cys-250, His-252, and Cys-258 each contribute to the Zn(2+) site.

This sequence belongs to the TRAFAC class YlqF/YawG GTPase family. RsgA subfamily. In terms of assembly, monomer. Associates with 30S ribosomal subunit, binds 16S rRNA. The cofactor is Zn(2+).

Its subcellular location is the cytoplasm. One of several proteins that assist in the late maturation steps of the functional core of the 30S ribosomal subunit. Helps release RbfA from mature subunits. May play a role in the assembly of ribosomal proteins into the subunit. Circularly permuted GTPase that catalyzes slow GTP hydrolysis, GTPase activity is stimulated by the 30S ribosomal subunit. This is Small ribosomal subunit biogenesis GTPase RsgA from Clostridium botulinum (strain Okra / Type B1).